The primary structure comprises 480 residues: Proline--tRNA ligase (480 aa).

Belongs to the class-II aminoacyl-tRNA synthetase family. ProS type 3 subfamily. As to quaternary structure, homodimer.

It is found in the cytoplasm. It carries out the reaction tRNA(Pro) + L-proline + ATP = L-prolyl-tRNA(Pro) + AMP + diphosphate. In terms of biological role, catalyzes the attachment of proline to tRNA(Pro) in a two-step reaction: proline is first activated by ATP to form Pro-AMP and then transferred to the acceptor end of tRNA(Pro). The protein is Proline--tRNA ligase of Alkaliphilus oremlandii (strain OhILAs) (Clostridium oremlandii (strain OhILAs)).